Here is a 302-residue protein sequence, read N- to C-terminus: N-acetyl-D-glucosamine kinase (302 aa).

ATP is bound by residues 4-11 (GFDIGGTK) and 133-139 (GGGGLVL). Positions 156, 176, 178, and 183 each coordinate Zn(2+).

It belongs to the ROK (NagC/XylR) family. NagK subfamily.

It catalyses the reaction N-acetyl-D-glucosamine + ATP = N-acetyl-D-glucosamine 6-phosphate + ADP + H(+). Its pathway is cell wall biogenesis; peptidoglycan recycling. Catalyzes the phosphorylation of N-acetyl-D-glucosamine (GlcNAc) derived from cell-wall degradation, yielding GlcNAc-6-P. This Salmonella typhi protein is N-acetyl-D-glucosamine kinase.